Here is a 422-residue protein sequence, read N- to C-terminus: UDP-N-acetyl-D-glucosamine 6-dehydrogenase (422 aa).

The NAD(+) site is built by valine 14, aspartate 32, arginine 37, threonine 83, and threonine 118. Residue cysteine 258 is the Nucleophile of the active site. Arginine 329 provides a ligand contact to NAD(+).

It belongs to the UDP-glucose/GDP-mannose dehydrogenase family.

The catalysed reaction is UDP-N-acetyl-alpha-D-glucosamine + 2 NAD(+) + H2O = UDP-2-acetamido-2-deoxy-alpha-D-glucuronate + 2 NADH + 3 H(+). Its pathway is bacterial outer membrane biogenesis; LPS O-antigen biosynthesis. Its activity is regulated as follows. Requires either potassium or ammonium-containing salts for activity. Functionally, dehydrogenase required for the biosynthesis of the B-band O antigen of serotype O6 lipopolysaccharide. Is also required for flagellin glycosylation. Catalyzes the conversion of UDP-N-acetylglucosamine (UDP-GlcNAc) to UDP-N-acetylglucosaminuronic acid (UDP-GlcNAcA). Can also catalyze the conversion of UDP-N-acetyl-galactosamine (UDP-GalNAc) to UDP-N-acetylgalactosaminuronic acid (UDP-GalNAcA), with low efficiency. Can use NAD(+) or NADP(+), with a preference for NAD(+). The polypeptide is UDP-N-acetyl-D-glucosamine 6-dehydrogenase (Pseudomonas aeruginosa).